A 701-amino-acid polypeptide reads, in one-letter code: Cytosolic endo-beta-N-acetylglucosaminidase 2 (701 aa).

Belongs to the glycosyl hydrolase 85 family.

It is found in the cytoplasm. It localises to the cytosol. It catalyses the reaction an N(4)-(oligosaccharide-(1-&gt;3)-[oligosaccharide-(1-&gt;6)]-beta-D-Man-(1-&gt;4)-beta-D-GlcNAc-(1-&gt;4)-alpha-D-GlcNAc)-L-asparaginyl-[protein] + H2O = an oligosaccharide-(1-&gt;3)-[oligosaccharide-(1-&gt;6)]-beta-D-Man-(1-&gt;4)-D-GlcNAc + N(4)-(N-acetyl-beta-D-glucosaminyl)-L-asparaginyl-[protein]. Functionally, endoglycosidase that releases N-glycans from glycoproteins by cleaving the beta-1,4-glycosidic bond in the N,N'-diacetylchitobiose core. Involved in the production of high-mannose type N-glycans during plant development and fruit maturation. In Arabidopsis thaliana (Mouse-ear cress), this protein is Cytosolic endo-beta-N-acetylglucosaminidase 2.